Consider the following 104-residue polypeptide: Large ribosomal subunit protein eL42 (104 aa).

It belongs to the eukaryotic ribosomal protein eL42 family. Component of the large ribosomal subunit. Mature ribosomes consist of a small (40S) and a large (60S) subunit. The 40S subunit contains about 32 different proteins and 1 molecule of RNA (18S). The 60S subunit contains about 42 different proteins and 3 molecules of RNA (28S, 5.8S and 5S).

It localises to the cytoplasm. Component of the ribosome, a large ribonucleoprotein complex responsible for the synthesis of proteins in the cell. The small ribosomal subunit (SSU) binds messenger RNAs (mRNAs) and translates the encoded message by selecting cognate aminoacyl-transfer RNA (tRNA) molecules. The large subunit (LSU) contains the ribosomal catalytic site termed the peptidyl transferase center (PTC), which catalyzes the formation of peptide bonds, thereby polymerizing the amino acids delivered by tRNAs into a polypeptide chain. The nascent polypeptides leave the ribosome through a tunnel in the LSU and interact with protein factors that function in enzymatic processing, targeting, and the membrane insertion of nascent chains at the exit of the ribosomal tunnel. In Plasmodium falciparum (isolate 3D7), this protein is Large ribosomal subunit protein eL42.